Reading from the N-terminus, the 313-residue chain is Ribosomal RNA small subunit methyltransferase H (313 aa).

S-adenosyl-L-methionine is bound by residues 35–37 (GGH), aspartate 55, phenylalanine 81, aspartate 103, and glutamine 110.

The protein belongs to the methyltransferase superfamily. RsmH family.

It is found in the cytoplasm. The catalysed reaction is cytidine(1402) in 16S rRNA + S-adenosyl-L-methionine = N(4)-methylcytidine(1402) in 16S rRNA + S-adenosyl-L-homocysteine + H(+). Its function is as follows. Specifically methylates the N4 position of cytidine in position 1402 (C1402) of 16S rRNA. The chain is Ribosomal RNA small subunit methyltransferase H from Pseudomonas aeruginosa (strain LESB58).